The following is a 96-amino-acid chain: uncharacterized protein (96 aa).

It is found in the mitochondrion. This is an uncharacterized protein from Schizosaccharomyces pombe (strain 972 / ATCC 24843) (Fission yeast).